A 251-amino-acid chain; its full sequence is Flap endonuclease Xni (251 aa).

Aspartate 104 is a binding site for Mg(2+). Residues 160–249 (VLPRQLPDYW…IDGNLQQLRL (90 aa)) enclose the 5'-3' exonuclease domain. Positions 171, 172, 180, 182, and 185 each coordinate K(+). The segment at 184–189 (GIGPKS) is interaction with DNA.

This sequence belongs to the Xni family. It depends on Mg(2+) as a cofactor. Requires K(+) as cofactor.

Functionally, has flap endonuclease activity. During DNA replication, flap endonucleases cleave the 5'-overhanging flap structure that is generated by displacement synthesis when DNA polymerase encounters the 5'-end of a downstream Okazaki fragment. In Salmonella schwarzengrund (strain CVM19633), this protein is Flap endonuclease Xni.